A 401-amino-acid polypeptide reads, in one-letter code: Argininosuccinate synthase (401 aa).

9 to 17 (AYSGGLDTS) contacts ATP. Tyr-86 serves as a coordination point for L-citrulline. Gly-116 is an ATP binding site. Positions 118, 122, and 123 each coordinate L-aspartate. Residue Asn-122 coordinates L-citrulline. Positions 126, 174, 183, 259, and 271 each coordinate L-citrulline.

Belongs to the argininosuccinate synthase family. Type 1 subfamily. As to quaternary structure, homotetramer.

Its subcellular location is the cytoplasm. The catalysed reaction is L-citrulline + L-aspartate + ATP = 2-(N(omega)-L-arginino)succinate + AMP + diphosphate + H(+). Its pathway is amino-acid biosynthesis; L-arginine biosynthesis; L-arginine from L-ornithine and carbamoyl phosphate: step 2/3. The sequence is that of Argininosuccinate synthase from Bacillus cytotoxicus (strain DSM 22905 / CIP 110041 / 391-98 / NVH 391-98).